We begin with the raw amino-acid sequence, 334 residues long: Glycerol-1-phosphate dehydrogenase [NAD(P)+] (334 aa).

NAD(+) is bound by residues 77 to 81 and 99 to 102; these read GRPID and TTAS. D104 provides a ligand contact to substrate. S108 is an NAD(+) binding site. D147 serves as a coordination point for substrate. The Zn(2+) site is built by D147 and H225. Residue H229 participates in substrate binding. A Zn(2+)-binding site is contributed by H246.

The protein belongs to the glycerol-1-phosphate dehydrogenase family. Requires Zn(2+) as cofactor.

Its subcellular location is the cytoplasm. The catalysed reaction is sn-glycerol 1-phosphate + NAD(+) = dihydroxyacetone phosphate + NADH + H(+). It catalyses the reaction sn-glycerol 1-phosphate + NADP(+) = dihydroxyacetone phosphate + NADPH + H(+). It functions in the pathway membrane lipid metabolism; glycerophospholipid metabolism. Functionally, catalyzes the NAD(P)H-dependent reduction of dihydroxyacetonephosphate (DHAP or glycerone phosphate) to glycerol 1-phosphate (G1P). The G1P thus generated is used as the glycerophosphate backbone of phospholipids in the cellular membranes of Archaea. The polypeptide is Glycerol-1-phosphate dehydrogenase [NAD(P)+] (Methanococcus maripaludis (strain DSM 14266 / JCM 13030 / NBRC 101832 / S2 / LL)).